The following is a 297-amino-acid chain: Ubiquinol oxidase 2, mitochondrial (297 aa).

The interval 17–43 (VALNDKQHDKKVENGGAAASGGGDGGD) is disordered. Residues 122–142 (AMMLETVAAVPGMVGGMLLHC) traverse the membrane as a helical segment. Residues Glu-126, Glu-165, and His-168 each coordinate Fe cation. A helical membrane pass occupies residues 184–204 (ALVFAVQGVFINAYFVTYLLS). Residues Glu-216, Glu-267, and His-270 each contribute to the Fe cation site.

Belongs to the alternative oxidase family. As to quaternary structure, homodimer; disulfide-linked. Fe cation serves as cofactor.

Its subcellular location is the mitochondrion inner membrane. It carries out the reaction 2 a ubiquinol + O2 = 2 a ubiquinone + 2 H2O. Catalyzes the cyanide-resistant oxidation of ubiquinol and the reduction of molecular oxygen to water, but does not translocate protons and consequently is not linked to oxidative phosphorylation. May increase respiration when the cytochrome respiratory pathway is restricted, or in response to low temperatures. In Nicotiana tabacum (Common tobacco), this protein is Ubiquinol oxidase 2, mitochondrial (AOX2).